The chain runs to 243 residues: MQTPKYRRVVLKLSGEALAGAKGFGLDPQVLTALARQIKAVHDMGVQVAIVVGAGNFWRGRLGEQMGMDRASADYMGLLATVMNALALQDAIEKLQVDTRVMTAVEMRQVAEPFIRRRAIRHLEKGRVVIFAAGTGNPYFTTDTAAALRAAEIEAEAILMGKQGVQGVYDSDPRINRHAVKYDEVTYQEVLAKNLQVMDATATALCMDNRIPIVVFDMMGPDHIVKVVLGEDVGQTFVRGNNQ.

Position 12–15 (12–15 (KLSG)) interacts with ATP. An involved in allosteric activation by GTP region spans residues 20–25 (GAKGFG). ATP contacts are provided by glycine 55 and arginine 59. UMP-binding positions include aspartate 74 and 135–142 (TGNPYFTT). ATP contacts are provided by glutamine 163, tyrosine 169, and aspartate 172.

This sequence belongs to the UMP kinase family. Homohexamer.

The protein localises to the cytoplasm. It catalyses the reaction UMP + ATP = UDP + ADP. The protein operates within pyrimidine metabolism; CTP biosynthesis via de novo pathway; UDP from UMP (UMPK route): step 1/1. Allosterically activated by GTP. Inhibited by UTP. Its function is as follows. Catalyzes the reversible phosphorylation of UMP to UDP. This Symbiobacterium thermophilum (strain DSM 24528 / JCM 14929 / IAM 14863 / T) protein is Uridylate kinase.